The sequence spans 60 residues: Sperm protamine P1 (60 aa).

Residues 1 to 60 form a disordered region; that stretch reads MARYRHSRSRSRSRYQRRRRRRSRYRSQRRRYRRRRGSRRRRRRGRRRGYRRRYSRRRRY.

The protein belongs to the protamine P1 family. Testis.

The protein localises to the nucleus. Its subcellular location is the chromosome. Protamines substitute for histones in the chromatin of sperm during the haploid phase of spermatogenesis. They compact sperm DNA into a highly condensed, stable and inactive complex. This chain is Sperm protamine P1 (PRM1), found in Phascolarctos cinereus (Koala).